The sequence spans 186 residues: Large ribosomal subunit protein uL5 (186 aa).

The protein belongs to the universal ribosomal protein uL5 family. As to quaternary structure, part of the 50S ribosomal subunit; part of the 5S rRNA/L5/L18/L25 subcomplex. Contacts the 5S rRNA and the P site tRNA. Forms a bridge to the 30S subunit in the 70S ribosome.

Functionally, this is one of the proteins that bind and probably mediate the attachment of the 5S RNA into the large ribosomal subunit, where it forms part of the central protuberance. In the 70S ribosome it contacts protein S13 of the 30S subunit (bridge B1b), connecting the 2 subunits; this bridge is implicated in subunit movement. Contacts the P site tRNA; the 5S rRNA and some of its associated proteins might help stabilize positioning of ribosome-bound tRNAs. The protein is Large ribosomal subunit protein uL5 of Legionella pneumophila subsp. pneumophila (strain Philadelphia 1 / ATCC 33152 / DSM 7513).